The following is a 143-amino-acid chain: Large ribosomal subunit protein uL15 (143 aa).

Composition is skewed to basic residues over residues 1–13 (MIRK…KMRG) and 23–38 (KKHR…GNAG). The interval 1-38 (MIRKSKKITKMRGSRTCGYGEAKKHRGAGHRGGRGNAG) is disordered.

This sequence belongs to the universal ribosomal protein uL15 family. In terms of assembly, part of the 50S ribosomal subunit.

Binds to the 23S rRNA. In Methanococcus maripaludis (strain C6 / ATCC BAA-1332), this protein is Large ribosomal subunit protein uL15.